We begin with the raw amino-acid sequence, 212 residues long: Pyridoxine/pyridoxamine 5'-phosphate oxidase (212 aa).

Residues 59–64 (RMVLMK), 74–75 (YS), Lys-81, and Gln-103 each bind FMN. A substrate-binding site is contributed by Lys-64. Positions 121 and 125 each coordinate substrate. FMN is bound by residues 138-139 (QS) and Trp-183. 189–191 (RLH) serves as a coordination point for substrate. Residue Arg-193 participates in FMN binding.

This sequence belongs to the pyridoxamine 5'-phosphate oxidase family. As to quaternary structure, homodimer. Requires FMN as cofactor.

The enzyme catalyses pyridoxamine 5'-phosphate + O2 + H2O = pyridoxal 5'-phosphate + H2O2 + NH4(+). The catalysed reaction is pyridoxine 5'-phosphate + O2 = pyridoxal 5'-phosphate + H2O2. It participates in cofactor metabolism; pyridoxal 5'-phosphate salvage; pyridoxal 5'-phosphate from pyridoxamine 5'-phosphate: step 1/1. It functions in the pathway cofactor metabolism; pyridoxal 5'-phosphate salvage; pyridoxal 5'-phosphate from pyridoxine 5'-phosphate: step 1/1. Its function is as follows. Catalyzes the oxidation of either pyridoxine 5'-phosphate (PNP) or pyridoxamine 5'-phosphate (PMP) into pyridoxal 5'-phosphate (PLP). This is Pyridoxine/pyridoxamine 5'-phosphate oxidase from Rhodopseudomonas palustris (strain BisB5).